The chain runs to 539 residues: RING finger protein 37 (539 aa).

A disordered region spans residues 226 to 249 (PALPMESDCDPGGQSESQHSPCTL). Residues 239–249 (QSESQHSPCTL) show a composition bias toward polar residues. A U-box domain is found at 258 to 338 (DVPEEFLDPI…DRFLLQHSIS (81 aa)). 2 disordered regions span residues 359–399 (LPSR…EPTA) and 456–479 (GTRG…VSGP). Over residues 374 to 395 (HYSLGMSASSSATSPLFSPTTS) the composition is skewed to low complexity. The RING-type zinc-finger motif lies at 481–526 (CASCKQAFSSYSTNEPVYQLPCGHLLCRPCLSEKQRSQPMMCTACR).

In terms of assembly, interacts with UBE2L3. Interacts with VCP. Expressed in testis and placenta.

It is found in the nucleus. The enzyme catalyses S-ubiquitinyl-[E2 ubiquitin-conjugating enzyme]-L-cysteine + [acceptor protein]-L-lysine = [E2 ubiquitin-conjugating enzyme]-L-cysteine + N(6)-ubiquitinyl-[acceptor protein]-L-lysine.. Its pathway is protein modification; protein ubiquitination. In terms of biological role, may have a ubiquitin-protein ligase activity acting as an E3 ubiquitin-protein ligase or as a ubiquitin-ubiquitin ligase promoting elongation of ubiquitin chains on substrates. This is RING finger protein 37 (Ubox5) from Mus musculus (Mouse).